We begin with the raw amino-acid sequence, 223 residues long: Ribose-5-phosphate isomerase A (223 aa).

Substrate is bound by residues threonine 29–threonine 32, aspartate 82–aspartate 85, and lysine 95–glycine 98. Glutamate 104 (proton acceptor) is an active-site residue. Lysine 122 contacts substrate.

It belongs to the ribose 5-phosphate isomerase family. In terms of assembly, homodimer.

It carries out the reaction aldehydo-D-ribose 5-phosphate = D-ribulose 5-phosphate. The protein operates within carbohydrate degradation; pentose phosphate pathway; D-ribose 5-phosphate from D-ribulose 5-phosphate (non-oxidative stage): step 1/1. Its function is as follows. Catalyzes the reversible conversion of ribose-5-phosphate to ribulose 5-phosphate. The protein is Ribose-5-phosphate isomerase A of Neisseria gonorrhoeae (strain ATCC 700825 / FA 1090).